Consider the following 88-residue polypeptide: Small ribosomal subunit protein bS20 (88 aa).

The interval methionine 1 to serine 23 is disordered.

Belongs to the bacterial ribosomal protein bS20 family.

In terms of biological role, binds directly to 16S ribosomal RNA. The polypeptide is Small ribosomal subunit protein bS20 (Saccharophagus degradans (strain 2-40 / ATCC 43961 / DSM 17024)).